We begin with the raw amino-acid sequence, 128 residues long: Large ribosomal subunit protein bL12 (128 aa).

Belongs to the bacterial ribosomal protein bL12 family. Homodimer. Part of the ribosomal stalk of the 50S ribosomal subunit. Forms a multimeric L10(L12)X complex, where L10 forms an elongated spine to which 2 to 4 L12 dimers bind in a sequential fashion. Binds GTP-bound translation factors.

Forms part of the ribosomal stalk which helps the ribosome interact with GTP-bound translation factors. Is thus essential for accurate translation. The sequence is that of Large ribosomal subunit protein bL12 from Petrotoga mobilis (strain DSM 10674 / SJ95).